Here is a 675-residue protein sequence, read N- to C-terminus: Acyl-coenzyme A oxidase 3, peroxisomal (675 aa).

Residues 1–34 (MSDNRALRRAHVLANHILQSNPPSSNPSLSRELC) constitute a peroxisome transit peptide. FAD is bound at residue 442–457 (AVGGQGVKTENLVGQL).

This sequence belongs to the acyl-CoA oxidase family. FAD serves as cofactor. Most abundant in flowers and senescing rosette leaves. Lower expression in hypocotyls, stems, young rosette leaves, cotyledons, cauline leaves and root tip of young seedlings.

Its subcellular location is the peroxisome. It carries out the reaction a 2,3-saturated acyl-CoA + O2 = a (2E)-enoyl-CoA + H2O2. Its pathway is lipid metabolism; peroxisomal fatty acid beta-oxidation. In terms of biological role, catalyzes the desaturation of medium-chain acyl-CoAs to 2-trans-enoyl-CoAs. Active on C8:0- to C14:0-CoA with a maximal activity on C12:0-CoA. This Arabidopsis thaliana (Mouse-ear cress) protein is Acyl-coenzyme A oxidase 3, peroxisomal (ACX3).